Consider the following 611-residue polypeptide: DNA-directed RNA polymerase subunit Rpo2C (611 aa).

Zn(2+) is bound by residues Cys547, Cys550, Cys565, and Cys568.

It belongs to the RNA polymerase beta chain family. In terms of assembly, part of the RNA polymerase complex. Zn(2+) is required as a cofactor.

It localises to the cytoplasm. The enzyme catalyses RNA(n) + a ribonucleoside 5'-triphosphate = RNA(n+1) + diphosphate. In terms of biological role, DNA-dependent RNA polymerase (RNAP) catalyzes the transcription of DNA into RNA using the four ribonucleoside triphosphates as substrates. The Rpo2 subunit (Rpo2N and Rpo2C in this organism) is implicated in DNA promoter recognition and in nucleotide binding. This Methanococcus vannielii (strain ATCC 35089 / DSM 1224 / JCM 13029 / OCM 148 / SB) protein is DNA-directed RNA polymerase subunit Rpo2C.